Here is a 193-residue protein sequence, read N- to C-terminus: DNA damage-inducible transcript 4-like protein (193 aa).

The protein belongs to the DDIT4 family.

The protein resides in the cytoplasm. Its function is as follows. Inhibits cell growth by regulating the TOR signaling pathway upstream of the TSC1-TSC2 complex and downstream of AKT1. This is DNA damage-inducible transcript 4-like protein (DDIT4L) from Pongo abelii (Sumatran orangutan).